The following is an 82-amino-acid chain: Large ribosomal subunit protein bL31B (82 aa).

Belongs to the bacterial ribosomal protein bL31 family. Type B subfamily. As to quaternary structure, part of the 50S ribosomal subunit.

The chain is Large ribosomal subunit protein bL31B from Acinetobacter baylyi (strain ATCC 33305 / BD413 / ADP1).